We begin with the raw amino-acid sequence, 131 residues long: UPF0102 protein YraN (131 aa).

A compositionally biased stretch (polar residues) spans 1 to 19; the sequence is MATVPTRSGSPRQLTTKQT. The disordered stretch occupies residues 1–20; the sequence is MATVPTRSGSPRQLTTKQTG.

Belongs to the UPF0102 family.

This Escherichia coli O17:K52:H18 (strain UMN026 / ExPEC) protein is UPF0102 protein YraN.